The primary structure comprises 208 residues: HTLV-1 basic zipper factor (208 aa).

Positions 59 to 93 (RLRWGPVGEEAPPRGETHRDRQRRAEEKRKRKRER) are disordered. Over residues 69-86 (APPRGETHRDRQRRAEEK) the composition is skewed to basic and acidic residues. 3 short sequence motifs (nuclear localization signal) span residues 86–91 (KRKRKR), 115–119 (RRRRA), and 136–140 (RRERK). The segment covering 125–143 (DRARRKLEEEERRERKWRQ) has biased composition (basic and acidic residues). A disordered region spans residues 125 to 160 (DRARRKLEEEERRERKWRQTEQGAKQRSARKEKMTE).

The protein belongs to the HTLV-1 HBZ protein family. In terms of assembly, interacts with host ATF4; this interaction inhibits viral RNA transcriptional activation by preventing ATF4 binding to Tax-responsive elements. Interacts with host CREB1; this interaction inhibits host CREB1 transcriptional activity. Interacts with host JUN, JUNB and JUND. Interacts with host EP300.

Its subcellular location is the host nucleus. Contributes to the regulation of viral RNA transcription by interacting with host proteins involved in transcriptional activation such as ATF4, or CREB1, and by inhibiting their activity. Additionally, HBZ suppresses host NF-kappa-B-driven transcription mediated by host RELA as well as transcription of some classical NF-kappa-B target genes, including IL8, IL2RA, IRF4, VCAM1, and VEGFA. This chain is HTLV-1 basic zipper factor (HBZ), found in Human T-cell leukemia virus 1 (isolate Melanesia mel5 subtype C) (HTLV-1).